The chain runs to 326 residues: Deoxyuridine 5'-triphosphate nucleotidohydrolase (326 aa).

Substrate is bound by residues 218–220 (RSS) and 321–322 (FG).

The protein belongs to the dUTPase family. It depends on Mg(2+) as a cofactor.

The catalysed reaction is dUTP + H2O = dUMP + diphosphate + H(+). Involved in nucleotide metabolism: produces dUMP, the immediate precursor of thymidine nucleotides and decreases the intracellular concentration of dUTP to avoid uracil incorporation into viral DNA. The sequence is that of Deoxyuridine 5'-triphosphate nucleotidohydrolase from Equus caballus (Horse).